A 65-amino-acid chain; its full sequence is Large ribosomal subunit protein uL29 (65 aa).

It belongs to the universal ribosomal protein uL29 family.

This Brevibacillus brevis (strain 47 / JCM 6285 / NBRC 100599) protein is Large ribosomal subunit protein uL29.